The chain runs to 305 residues: Acetaldehyde dehydrogenase (305 aa).

Position 13 to 16 (13 to 16 (SGNI)) interacts with NAD(+). The Acyl-thioester intermediate role is filled by cysteine 128. Residues 159-167 (SAGPGTRQN) and asparagine 278 contribute to the NAD(+) site.

This sequence belongs to the acetaldehyde dehydrogenase family.

The enzyme catalyses acetaldehyde + NAD(+) + CoA = acetyl-CoA + NADH + H(+). The chain is Acetaldehyde dehydrogenase from Roseiflexus sp. (strain RS-1).